Consider the following 187-residue polypeptide: Accessory gene regulator protein B (187 aa).

Transmembrane regions (helical) follow at residues 49-69 (LAYI…FYLI), 82-102 (FWCY…VLHF), 107-127 (TLMM…APAA), 143-163 (YFSI…KEPY), and 164-184 (TQFI…IYYS).

It belongs to the AgrB family.

It is found in the cell membrane. Essential for the production of a quorum sensing system signal molecule, the autoinducing peptide (AIP). This quorum sensing system is responsible for the regulation of the expression of virulence factor genes. Involved in the proteolytic processing of AgrD, the precursor of AIP. In Staphylococcus aureus (strain MRSA252), this protein is Accessory gene regulator protein B.